The following is a 236-amino-acid chain: Small ribosomal subunit protein uS2c (236 aa).

The protein belongs to the universal ribosomal protein uS2 family.

The protein resides in the plastid. It localises to the chloroplast. This Vitis vinifera (Grape) protein is Small ribosomal subunit protein uS2c (rps2).